A 322-amino-acid chain; its full sequence is Ribonuclease Z (322 aa).

Positions 62, 64, 66, 67, 143, 215, and 273 each coordinate Zn(2+). The active-site Proton acceptor is aspartate 66. Residues 300-314 (ELRRYELDPREKEPD) show a composition bias toward basic and acidic residues. The disordered stretch occupies residues 300–322 (ELRRYELDPREKEPDPVGPADES).

Belongs to the RNase Z family. As to quaternary structure, homodimer. It depends on Zn(2+) as a cofactor.

It carries out the reaction Endonucleolytic cleavage of RNA, removing extra 3' nucleotides from tRNA precursor, generating 3' termini of tRNAs. A 3'-hydroxy group is left at the tRNA terminus and a 5'-phosphoryl group is left at the trailer molecule.. Functionally, zinc phosphodiesterase, which displays some tRNA 3'-processing endonuclease activity. Probably involved in tRNA maturation, by removing a 3'-trailer from precursor tRNA. The protein is Ribonuclease Z of Salinibacter ruber (strain DSM 13855 / M31).